The sequence spans 1661 residues: Mediator of RNA polymerase II transcription subunit 12 (1661 aa).

Disordered regions lie at residues 1-22, 524-550, and 1501-1527; these read MSKT…VSNS, KDRR…ITGK, and DDMT…PDGT. Composition is skewed to polar residues over residues 7 to 22, 539 to 548, and 1505 to 1527; these read RNSL…VSNS, DTKNNYNSIT, and TDTS…PDGT.

Belongs to the Mediator complex subunit 12 family. As to quaternary structure, component of the SRB8-11 complex, which itself associates with the Mediator complex.

Its subcellular location is the nucleus. Component of the SRB8-11 complex. The SRB8-11 complex is a regulatory module of the Mediator complex which is itself involved in regulation of basal and activated RNA polymerase II-dependent transcription. The SRB8-11 complex may be involved in the transcriptional repression of a subset of genes regulated by Mediator. It may inhibit the association of the Mediator complex with RNA polymerase II to form the holoenzyme complex. The polypeptide is Mediator of RNA polymerase II transcription subunit 12 (SRB8) (Debaryomyces hansenii (strain ATCC 36239 / CBS 767 / BCRC 21394 / JCM 1990 / NBRC 0083 / IGC 2968) (Yeast)).